A 411-amino-acid polypeptide reads, in one-letter code: Arginine deiminase (411 aa).

C401 (amidino-cysteine intermediate) is an active-site residue.

This sequence belongs to the arginine deiminase family. Glycosylated.

It localises to the cytoplasm. The catalysed reaction is L-arginine + H2O = L-citrulline + NH4(+). It participates in amino-acid degradation; L-arginine degradation via ADI pathway; carbamoyl phosphate from L-arginine: step 1/2. In Streptococcus pyogenes serotype M1, this protein is Arginine deiminase (arcA).